The primary structure comprises 1313 residues: Kinesin-like protein KIN-12B (1313 aa).

A disordered region spans residues 1–74 (MKHFMMPRNA…PPRPPSSNPL (74 aa)). Positions 17-26 (ESQSPNPSLT) are enriched in polar residues. The region spanning 96–431 (GVKVIVRMKP…LRFAQRAKAI (336 aa)) is the Kinesin motor domain. ATP is bound at residue 170–177 (GQTGSGKT). 3 microtubules-binding regions span residues 298-302 (SSRSH), 331-337 (VDLAGSE), and 380-384 (HIPYR). Positions 429 to 467 (KAIQNKAIVNEVMQDDVNFLREVIRQLRDELQRVKDDKG) are neck. Residues 685-709 (ESASPKIRNSRKSLRTTSMSTASQK) form a disordered region. Over residues 699–708 (RTTSMSTASQ) the composition is skewed to polar residues. Coiled coils occupy residues 932–1003 (LDEE…YTDS), 1062–1130 (AEEL…RIRE), and 1167–1241 (EKEV…TEIS).

It belongs to the TRAFAC class myosin-kinesin ATPase superfamily. Kinesin family. KIN-12 subfamily. As to quaternary structure, homodimer and heterodimer with KIN12A. Interacts with TIO.

The protein localises to the cytoplasm. Its subcellular location is the cytoskeleton. The protein resides in the phragmoplast. In terms of biological role, plus-end directed kinesin-like motor enzyme that plays a critical role in the organization of phragmoplast microtubules during cytokinesis. Constitutes a signaling module in association with serine/threonine-protein kinase TIO that is required to support phragmoplast expansion and cell-plate growth in plant cells. This Arabidopsis thaliana (Mouse-ear cress) protein is Kinesin-like protein KIN-12B.